The following is a 364-amino-acid chain: Probable UDP-arabinopyranose mutase 1 (364 aa).

Residues 110-112 (DDD) carry the DXD motif motif. N-linked (Glc...) arginine glycosylation occurs at arginine 158.

The protein belongs to the RGP family. As to quaternary structure, homopentamer or homohexamer. Mn(2+) serves as cofactor. It depends on Mg(2+) as a cofactor. In terms of processing, reversibly glycosylated by UDP-glucose, UDP-xylose and UDP-galactose.

Its subcellular location is the secreted. The protein localises to the cell wall. It localises to the cell junction. It is found in the plasmodesma. The protein resides in the golgi apparatus. The catalysed reaction is UDP-beta-L-arabinofuranose = UDP-beta-L-arabinopyranose. Functionally, probable UDP-L-arabinose mutase involved in the biosynthesis of cell wall non-cellulosic polysaccharides. Was initially shown to possess an autoglycosylating activity which is dependent on the presence of UDP-glucose and manganese. The chain is Probable UDP-arabinopyranose mutase 1 from Zea mays (Maize).